Consider the following 515-residue polypeptide: MRKIKFFDTTLRDGEQSAGVNLNLQEKLEIARQLERLQVDIIEAGFPASSKGDFEAVKQIAETVRTCSVTGLSRSVRSDIDAAWEALKGGAEPRLHLFIATSPIHMVHKLRMTPEQVIEAAVEAVKYAKRFFPIVQWSAEDACRSELPFLAKIVTEVIKAGASVINIPDTVGYITPKEYGEIFLYLRNNVPNIENISLSAHCHDDLGMAVINSLSAIEHGATQVECTINGIGERAGNAALEEIAVALHIRKDYYQVETRLNLQEIKRTSNLVSKLTGMVVPPNKAVVGKNAFAHESGIHQDGVLKEKTTYEIISPELVGVSSNSMVLGKHSGRHALRNRVEELGYTLSEEEINQLFVRFKELADKKKDVTDDDLIALIFEEKFDHFKDFYQLSSIQVQYGTNQIPTAVVVLKDGKGNTIQEAATGAGSVEALYNTLERCFQTAVTLLDYRIESVGGGRDALAQVFVKVRVNDVETSGRGTAQDVLEASAKAYINAMNRMFMIEAMRAENEKVTTP.

One can recognise a Pyruvate carboxyltransferase domain in the interval 4–266; sequence IKFFDTTLRD…ETRLNLQEIK (263 aa). 4 residues coordinate Mn(2+): Asp13, His201, His203, and Asn237. The tract at residues 391–515 is regulatory domain; the sequence is QLSSIQVQYG…RAENEKVTTP (125 aa).

It belongs to the alpha-IPM synthase/homocitrate synthase family. LeuA type 1 subfamily. Homodimer. Requires Mn(2+) as cofactor.

It is found in the cytoplasm. It carries out the reaction 3-methyl-2-oxobutanoate + acetyl-CoA + H2O = (2S)-2-isopropylmalate + CoA + H(+). The protein operates within amino-acid biosynthesis; L-leucine biosynthesis; L-leucine from 3-methyl-2-oxobutanoate: step 1/4. In terms of biological role, catalyzes the condensation of the acetyl group of acetyl-CoA with 3-methyl-2-oxobutanoate (2-ketoisovalerate) to form 3-carboxy-3-hydroxy-4-methylpentanoate (2-isopropylmalate). The chain is 2-isopropylmalate synthase from Geobacillus thermodenitrificans (strain NG80-2).